We begin with the raw amino-acid sequence, 202 residues long: Small ribosomal subunit protein uS2 (202 aa).

This sequence belongs to the universal ribosomal protein uS2 family. In terms of assembly, part of the 30S ribosomal subunit.

In Pyrococcus furiosus (strain ATCC 43587 / DSM 3638 / JCM 8422 / Vc1), this protein is Small ribosomal subunit protein uS2.